We begin with the raw amino-acid sequence, 189 residues long: Peptidyl-tRNA hydrolase (189 aa).

His-14 is a binding site for tRNA. His-19 acts as the Proton acceptor in catalysis. 3 residues coordinate tRNA: Tyr-64, Asn-66, and Asn-112.

It belongs to the PTH family. Monomer.

The protein resides in the cytoplasm. It carries out the reaction an N-acyl-L-alpha-aminoacyl-tRNA + H2O = an N-acyl-L-amino acid + a tRNA + H(+). Hydrolyzes ribosome-free peptidyl-tRNAs (with 1 or more amino acids incorporated), which drop off the ribosome during protein synthesis, or as a result of ribosome stalling. Its function is as follows. Catalyzes the release of premature peptidyl moieties from peptidyl-tRNA molecules trapped in stalled 50S ribosomal subunits, and thus maintains levels of free tRNAs and 50S ribosomes. This chain is Peptidyl-tRNA hydrolase, found in Chlorobium phaeobacteroides (strain BS1).